The following is a 448-amino-acid chain: Deoxyguanosinetriphosphate triphosphohydrolase-like protein (448 aa).

One can recognise an HD domain in the interval 67–260 (RLTHSLEVSQ…MELADDIAYG (194 aa)).

This sequence belongs to the dGTPase family. Type 2 subfamily.

The chain is Deoxyguanosinetriphosphate triphosphohydrolase-like protein from Aliivibrio salmonicida (strain LFI1238) (Vibrio salmonicida (strain LFI1238)).